A 414-amino-acid chain; its full sequence is xyloglucan O-acetyltransferase 2 (414 aa).

The Cytoplasmic segment spans residues 1–26 (MKSSSSIFRETSEKKSERWMMMNIGR). A helical; Signal-anchor for type II membrane protein transmembrane segment spans residues 27-47 (FSPFFLSSFCITLFFTGFFVY). Over 48–414 (QNPFKSIADQ…FLMAIIRQLR (367 aa)) the chain is Lumenal. 4 disulfides stabilise this stretch: cysteine 70–cysteine 120, cysteine 91–cysteine 156, cysteine 100–cysteine 394, and cysteine 317–cysteine 390. Asparagine 88 carries an N-linked (GlcNAc...) asparagine glycan. The GDS motif signature appears at 143-145 (GDS). The active-site Nucleophile is serine 145. N-linked (GlcNAc...) asparagine glycans are attached at residues asparagine 205, asparagine 263, and asparagine 308. Aspartate 389 functions as the Proton donor in the catalytic mechanism. The DXXH motif motif lies at 389–392 (DCVH). Catalysis depends on histidine 392, which acts as the Proton acceptor.

The protein belongs to the PC-esterase family. TBL subfamily.

The protein localises to the membrane. In terms of biological role, xyloglucan acetyltransferase that catalyzes the acetylation of fucosylated Gal residues on xyloglucan side chains. Predominantly catalyze 6-O-monoacetylation of Gal residues in the Fuc-Gal-Xyl trisaccharide side chains of xyloglucan oligomers. Involved in xyloglucan specific O-acetylation in seeds. The protein is xyloglucan O-acetyltransferase 2 of Arabidopsis thaliana (Mouse-ear cress).